The sequence spans 101 residues: MKIKKGDEVIVIAGKDKGATGKVKKALPKEQRVIVEGVNLIKKHKKANQAGGQQGEVVTLEAPIHVSNVALLEDGRPTRVGYRFKEDGTKVRISRRTGKEI.

This sequence belongs to the universal ribosomal protein uL24 family. In terms of assembly, part of the 50S ribosomal subunit.

Functionally, one of two assembly initiator proteins, it binds directly to the 5'-end of the 23S rRNA, where it nucleates assembly of the 50S subunit. One of the proteins that surrounds the polypeptide exit tunnel on the outside of the subunit. This Thermobifida fusca (strain YX) protein is Large ribosomal subunit protein uL24.